Consider the following 239-residue polypeptide: Probable 2-phosphosulfolactate phosphatase (239 aa).

The protein belongs to the ComB family. Mg(2+) serves as cofactor.

It carries out the reaction (2R)-O-phospho-3-sulfolactate + H2O = (2R)-3-sulfolactate + phosphate. The polypeptide is Probable 2-phosphosulfolactate phosphatase (Clostridium botulinum (strain 657 / Type Ba4)).